A 507-amino-acid polypeptide reads, in one-letter code: ATP synthase subunit alpha, chloroplastic (507 aa).

170 to 177 is an ATP binding site; that stretch reads GDRQTGKT. At Thr257 the chain carries Phosphothreonine.

Belongs to the ATPase alpha/beta chains family. F-type ATPases have 2 components, CF(1) - the catalytic core - and CF(0) - the membrane proton channel. CF(1) has five subunits: alpha(3), beta(3), gamma(1), delta(1), epsilon(1). CF(0) has four main subunits: a, b, b' and c.

It is found in the plastid. It localises to the chloroplast thylakoid membrane. It catalyses the reaction ATP + H2O + 4 H(+)(in) = ADP + phosphate + 5 H(+)(out). Functionally, produces ATP from ADP in the presence of a proton gradient across the membrane. The alpha chain is a regulatory subunit. The protein is ATP synthase subunit alpha, chloroplastic of Crucihimalaya wallichii (Rock-cress).